The chain runs to 670 residues: Pescadillo homolog (670 aa).

A coiled-coil region spans residues 292 to 321 (GANQAQAKVKEAESKRSLMEEELLKVRELF). One can recognise a BRCT domain in the interval 316-402 (KVRELFRGLT…QMLPVTGYRI (87 aa)). The interval 643 to 670 (RQRAEAKGKKLKEKKADNPYKKLPKWVQ) is disordered. Basic and acidic residues predominate over residues 644–662 (QRAEAKGKKLKEKKADNPY).

The protein belongs to the pescadillo family.

It localises to the nucleus. Its subcellular location is the nucleolus. The protein localises to the nucleoplasm. Functionally, required for maturation of ribosomal RNAs and formation of the large ribosomal subunit. The polypeptide is Pescadillo homolog (Leishmania braziliensis).